The primary structure comprises 478 residues: Transposon Ty1-H Gag polyprotein (478 aa).

Polar residues-rich tracts occupy residues 1-10 (MESQQLSNYP), 48-60 (TKAN…TPAS), and 127-152 (QSQF…GNTF). Disordered regions lie at residues 1-84 (MESQ…QNGP), 126-174 (PQSQ…PPPM), and 390-478 (GSRN…PETY). The segment covering 153-165 (TDSSSADSDMTST) has biased composition (low complexity). The RNA-binding stretch occupies residues 337–439 (NNGIHINNKV…NSKSKTARAH (103 aa)). A compositionally biased stretch (low complexity) spans 440–456 (NVSTSNNSPSTDNDSIS). Residues 457–466 (KSTTEPIQLN) are compositionally biased toward polar residues. The span at 467–478 (NKHDLHLRPETY) shows a compositional bias: basic and acidic residues.

In terms of assembly, homotrimer.

Its subcellular location is the cytoplasm. Capsid protein (CA) is the structural component of the virus-like particle (VLP), forming the shell that encapsulates the retrotransposons dimeric RNA genome. The particles are assembled from trimer-clustered units and there are holes in the capsid shells that allow for the diffusion of macromolecules. CA also has nucleocapsid-like chaperone activity, promoting primer tRNA(i)-Met annealing to the multipartite primer-binding site (PBS), dimerization of Ty1 RNA and initiation of reverse transcription. The sequence is that of Transposon Ty1-H Gag polyprotein (TY1A-H) from Saccharomyces cerevisiae (strain ATCC 204508 / S288c) (Baker's yeast).